The chain runs to 60 residues: Large ribosomal subunit protein uL30 (60 aa).

Belongs to the universal ribosomal protein uL30 family. In terms of assembly, part of the 50S ribosomal subunit.

This Flavobacterium johnsoniae (strain ATCC 17061 / DSM 2064 / JCM 8514 / BCRC 14874 / CCUG 350202 / NBRC 14942 / NCIMB 11054 / UW101) (Cytophaga johnsonae) protein is Large ribosomal subunit protein uL30.